We begin with the raw amino-acid sequence, 279 residues long: 3-methyl-2-oxobutanoate hydroxymethyltransferase (279 aa).

2 residues coordinate Mg(2+): Asp49 and Asp88. 3-methyl-2-oxobutanoate contacts are provided by residues 49–50 (DS), Asp88, and Lys118. Residue Glu120 coordinates Mg(2+). Glu187 acts as the Proton acceptor in catalysis.

This sequence belongs to the PanB family. In terms of assembly, homodecamer; pentamer of dimers. Mg(2+) serves as cofactor.

It localises to the cytoplasm. It catalyses the reaction 3-methyl-2-oxobutanoate + (6R)-5,10-methylene-5,6,7,8-tetrahydrofolate + H2O = 2-dehydropantoate + (6S)-5,6,7,8-tetrahydrofolate. Its pathway is cofactor biosynthesis; (R)-pantothenate biosynthesis; (R)-pantoate from 3-methyl-2-oxobutanoate: step 1/2. Catalyzes the reversible reaction in which hydroxymethyl group from 5,10-methylenetetrahydrofolate is transferred onto alpha-ketoisovalerate to form ketopantoate. This is 3-methyl-2-oxobutanoate hydroxymethyltransferase from Agrobacterium fabrum (strain C58 / ATCC 33970) (Agrobacterium tumefaciens (strain C58)).